Consider the following 103-residue polypeptide: MILVNTDFISGKEIETISLVKGSTIQSKNVGKDFLSGLKTLVGGELKAYSEMMNEAREIATNRMVEEAKSLGADAVINIRYATSAIMQGAAEVIVYGTAVKIL.

It belongs to the UPF0145 family.

The protein is UPF0145 protein NT01CX_0170 of Clostridium novyi (strain NT).